The following is a 194-amino-acid chain: Bis(5'-nucleosyl)-tetraphosphatase, symmetrical (194 aa).

The HD domain maps to 18–132 (RYNHSLRVAE…IFIADYIEPG (115 aa)). Residue His-21 participates in ADP binding. The Fe cation site is built by His-21, His-50, and Asp-51. Residues 51 to 54 (DFCK), His-83, 109 to 110 (HT), Asp-127, Arg-133, and 172 to 177 (TVYNKT) contribute to the ADP site. Asp-127 is a binding site for Fe cation.

Belongs to the Ap4A hydrolase YqeK family. Homodimer.

The enzyme catalyses P(1),P(4)-bis(5'-adenosyl) tetraphosphate + H2O = 2 ADP + 2 H(+). Its activity is regulated as follows. Inhibited by EDTA. Its function is as follows. Hydrolyzes diadenosine 5',5'''-P1,P4-tetraphosphate (Ap4A) to yield ADP. Can also hydrolyze Ap3A, Ap5A, Ap4G, Ap4U and Gp4G, always releasing ADP or GDP as one of the products, but it exhibits a marked preference for Ap4A, which is mainly exerted at the substrate affinity level. The protein is Bis(5'-nucleosyl)-tetraphosphatase, symmetrical of Staphylococcus aureus (strain NCTC 8325 / PS 47).